Reading from the N-terminus, the 379-residue chain is Carbamoyl phosphate synthase small chain (379 aa).

A CPSase region spans residues 1–189; that stretch reads MSKSALLVLE…GLPEAKDDSE (189 aa). Serine 47, glycine 241, and glycine 243 together coordinate L-glutamine. Residues 193–379 enclose the Glutamine amidotransferase type-1 domain; the sequence is HVVAYDFGAK…FIELIKQHSA (187 aa). The Nucleophile role is filled by cysteine 269. L-glutamine contacts are provided by leucine 270, glutamine 273, asparagine 311, glycine 313, and phenylalanine 314. Active-site residues include histidine 353 and glutamate 355.

It belongs to the CarA family. As to quaternary structure, composed of two chains; the small (or glutamine) chain promotes the hydrolysis of glutamine to ammonia, which is used by the large (or ammonia) chain to synthesize carbamoyl phosphate. Tetramer of heterodimers (alpha,beta)4.

The catalysed reaction is hydrogencarbonate + L-glutamine + 2 ATP + H2O = carbamoyl phosphate + L-glutamate + 2 ADP + phosphate + 2 H(+). It carries out the reaction L-glutamine + H2O = L-glutamate + NH4(+). It functions in the pathway amino-acid biosynthesis; L-arginine biosynthesis; carbamoyl phosphate from bicarbonate: step 1/1. Its pathway is pyrimidine metabolism; UMP biosynthesis via de novo pathway; (S)-dihydroorotate from bicarbonate: step 1/3. Functionally, small subunit of the glutamine-dependent carbamoyl phosphate synthetase (CPSase). CPSase catalyzes the formation of carbamoyl phosphate from the ammonia moiety of glutamine, carbonate, and phosphate donated by ATP, constituting the first step of 2 biosynthetic pathways, one leading to arginine and/or urea and the other to pyrimidine nucleotides. The small subunit (glutamine amidotransferase) binds and cleaves glutamine to supply the large subunit with the substrate ammonia. The polypeptide is Carbamoyl phosphate synthase small chain (Vibrio vulnificus (strain YJ016)).